The chain runs to 530 residues: Probable cytochrome P450 519A1 (530 aa).

Residues 1–21 (MESIINLIFYIIIFLILIDFL) traverse the membrane as a helical segment. Residue Cys-476 participates in heme binding.

Belongs to the cytochrome P450 family. Heme is required as a cofactor.

It localises to the membrane. The protein is Probable cytochrome P450 519A1 (cyp519A1) of Dictyostelium discoideum (Social amoeba).